A 310-amino-acid polypeptide reads, in one-letter code: Nitric oxide synthase-interacting protein homolog (310 aa).

Polar residues predominate over residues 115–124 (FSAIESTPSR). Positions 115 to 141 (FSAIESTPSRTGAVATPRPEVGSLKRQ) are disordered.

Belongs to the NOSIP family.

The protein resides in the cytoplasm. The protein localises to the nucleus. Functionally, negatively regulates nitric oxide production by inducing nitric oxide synthase translocation to actin cytoskeleton and inhibiting its enzymatic activity. This Caenorhabditis elegans protein is Nitric oxide synthase-interacting protein homolog.